We begin with the raw amino-acid sequence, 477 residues long: Glycogen synthase (477 aa).

Lys-15 contributes to the ADP-alpha-D-glucose binding site.

Belongs to the glycosyltransferase 1 family. Bacterial/plant glycogen synthase subfamily.

It catalyses the reaction [(1-&gt;4)-alpha-D-glucosyl](n) + ADP-alpha-D-glucose = [(1-&gt;4)-alpha-D-glucosyl](n+1) + ADP + H(+). It participates in glycan biosynthesis; glycogen biosynthesis. Functionally, synthesizes alpha-1,4-glucan chains using ADP-glucose. This chain is Glycogen synthase, found in Mannheimia succiniciproducens (strain KCTC 0769BP / MBEL55E).